Here is a 1096-residue protein sequence, read N- to C-terminus: Cation-transporting ATPase 5 (1096 aa).

The Cytoplasmic portion of the chain corresponds to 1–19; the sequence is MDSIELKQLVPENDSEPGT. A helical transmembrane segment spans residues 20 to 41; the sequence is PRQLLFQHYDISNEETIGIKPF. At 42–47 the chain is on the lumenal side; it reads KSIPAK. A helical membrane pass occupies residues 48–70; it reads VYILRVTEILTLGLLHLILTWLP. The Cytoplasmic segment spans residues 71–193; that stretch reads EFRLKWIEAP…LVSTKKSIVT (123 aa). A helical transmembrane segment spans residues 194 to 216; the sequence is ILLNEVLHPFYLFQAVSVLIWLC. At 217–220 the chain is on the lumenal side; it reads DSFV. Residues 221 to 238 traverse the membrane as a helical segment; it reads FYSCCIVFISSYSIFLSV. Over 239–391 the chain is Cytoplasmic; the sequence is KESKESENRI…NLRPSQLYLD (153 aa). Residues 392–412 traverse the membrane as a helical segment; sequence SMSFLKTMAILSFVSIVFIAI. The Lumenal portion of the chain corresponds to 413–425; the sequence is YLNLYNASFGHVV. The chain crosses the membrane as a helical span at residues 426-447; that stretch reads LRSLDVLTILVPPALPATLSVG. The Cytoplasmic portion of the chain corresponds to 448–895; that stretch reads IANSIARLSR…SLILSHRCFQ (448 aa). The active-site 4-aspartylphosphate intermediate is the aspartate 480. The Mg(2+) site is built by aspartate 838 and aspartate 842. A helical membrane pass occupies residues 896–915; the sequence is YMVLCAIVQFSGVFFLYLKN. At 916–922 the chain is on the lumenal side; it reads YNFNDNQ. The helical transmembrane segment at 923 to 940 threads the bilayer; sequence FLFMDLLIIFPLSAAMSY. Topologically, residues 941-958 are cytoplasmic; sequence FDPAQNLTSNRPNSTLFG. The chain crosses the membrane as a helical span at residues 959–982; that stretch reads KGRVKDLGIQSVLIWLSHGLLTLI. Residues 983 to 1003 are Lumenal-facing; it reads LHELNWVELPEWQLEKSNTKN. The chain crosses the membrane as a helical span at residues 1004-1026; the sequence is VLVTSIFLLSSLQYLGICIGINQ. The Cytoplasmic portion of the chain corresponds to 1027 to 1040; that stretch reads SSEFLSPIWKKKTY. A helical membrane pass occupies residues 1041-1060; the sequence is VCLCTTIGLCNIYLCFANEN. The Lumenal segment spans residues 1061 to 1075; that stretch reads HIISRCLQITRLPTL. Residues 1076 to 1096 traverse the membrane as a helical segment; the sequence is YRFIILFMGVISCCLTSILNM.

This sequence belongs to the cation transport ATPase (P-type) (TC 3.A.3) family. Type V subfamily.

The protein resides in the endoplasmic reticulum membrane. Its subcellular location is the golgi apparatus membrane. The catalysed reaction is ATP + H2O = ADP + phosphate + H(+). Its function is as follows. Plays a role in regulating calcium and manganese homeostasis responsible for cell cycle progression. The protein is Cation-transporting ATPase 5 (cta5) of Schizosaccharomyces pombe (strain 972 / ATCC 24843) (Fission yeast).